The primary structure comprises 375 residues: 23S rRNA (uracil(747)-C(5))-methyltransferase RlmC (375 aa).

The [4Fe-4S] cluster site is built by cysteine 3, cysteine 11, cysteine 14, and cysteine 87. The S-adenosyl-L-methionine site is built by glutamine 212, phenylalanine 241, glutamate 262, and asparagine 307. Residue cysteine 334 is the Nucleophile of the active site.

It belongs to the class I-like SAM-binding methyltransferase superfamily. RNA M5U methyltransferase family. RlmC subfamily.

The catalysed reaction is uridine(747) in 23S rRNA + S-adenosyl-L-methionine = 5-methyluridine(747) in 23S rRNA + S-adenosyl-L-homocysteine + H(+). Its function is as follows. Catalyzes the formation of 5-methyl-uridine at position 747 (m5U747) in 23S rRNA. The chain is 23S rRNA (uracil(747)-C(5))-methyltransferase RlmC from Escherichia coli (strain K12 / MC4100 / BW2952).